The following is a 386-amino-acid chain: Succinate--CoA ligase [ADP-forming] subunit beta (386 aa).

Residues Lys9–Arg244 form the ATP-grasp domain. Residues Lys46, Gly53–Gly55, Glu99, Cys102, and Glu107 contribute to the ATP site. Residues Asn199 and Asp213 each coordinate Mg(2+). Substrate contacts are provided by residues Asn264 and Gly321–Met323.

The protein belongs to the succinate/malate CoA ligase beta subunit family. As to quaternary structure, heterotetramer of two alpha and two beta subunits. Requires Mg(2+) as cofactor.

The enzyme catalyses succinate + ATP + CoA = succinyl-CoA + ADP + phosphate. It catalyses the reaction GTP + succinate + CoA = succinyl-CoA + GDP + phosphate. The protein operates within carbohydrate metabolism; tricarboxylic acid cycle; succinate from succinyl-CoA (ligase route): step 1/1. Its function is as follows. Succinyl-CoA synthetase functions in the citric acid cycle (TCA), coupling the hydrolysis of succinyl-CoA to the synthesis of either ATP or GTP and thus represents the only step of substrate-level phosphorylation in the TCA. The beta subunit provides nucleotide specificity of the enzyme and binds the substrate succinate, while the binding sites for coenzyme A and phosphate are found in the alpha subunit. The chain is Succinate--CoA ligase [ADP-forming] subunit beta from Rickettsia felis (strain ATCC VR-1525 / URRWXCal2) (Rickettsia azadi).